The primary structure comprises 696 residues: Methionine--tRNA ligase (696 aa).

A 'HIGH' region motif is present at residues 12-22; that stretch reads PYANGPLHLGH. The Zn(2+) site is built by Cys143, Cys146, Cys156, and Cys159. The 'KMSKS' region motif lies at 330-334; that stretch reads KMSKS. Lys333 is a binding site for ATP. The 104-residue stretch at 593-696 folds into the tRNA-binding domain; it reads DFAKLDLRIG…AGAQPGMPVR (104 aa).

It belongs to the class-I aminoacyl-tRNA synthetase family. MetG type 1 subfamily. As to quaternary structure, homodimer. Zn(2+) is required as a cofactor.

The protein resides in the cytoplasm. The catalysed reaction is tRNA(Met) + L-methionine + ATP = L-methionyl-tRNA(Met) + AMP + diphosphate. Its function is as follows. Is required not only for elongation of protein synthesis but also for the initiation of all mRNA translation through initiator tRNA(fMet) aminoacylation. The polypeptide is Methionine--tRNA ligase (Xanthomonas campestris pv. campestris (strain 8004)).